The sequence spans 173 residues: Alpha-crystallin A chain (173 aa).

Methionine 1 bears the N-acetylmethionine mark. The interval 1-63 (MDIAIQHPWF…RTVLDSGISE (63 aa)) is required for complex formation with BFSP1 and BFSP2. Glutamine 6 is subject to Deamidated glutamine; partial. Residue serine 45 is modified to Phosphoserine. Residue glutamine 50 is modified to Deamidated glutamine; partial. A sHSP domain is found at 52-162 (LFRTVLDSGI…GHSERAIPVS (111 aa)). An N6-acetyllysine modification is found at lysine 70. Deamidated glutamine; partial is present on glutamine 90. N6-acetyllysine is present on lysine 99. Histidine 100 serves as a coordination point for Zn(2+). At asparagine 101 the chain carries Deamidated asparagine; partial. Zn(2+) contacts are provided by glutamate 102 and histidine 107. At serine 122 the chain carries Phosphoserine. At asparagine 123 the chain carries Deamidated asparagine; partial. The interval 144–173 (PKIPSGVDAGHSERAIPVSREEKPSSAPSS) is disordered. Residues 153-167 (GHSERAIPVSREEKP) are compositionally biased toward basic and acidic residues. Residue histidine 154 participates in Zn(2+) binding. A glycan (O-linked (GlcNAc) serine) is linked at serine 162.

Belongs to the small heat shock protein (HSP20) family. In terms of assembly, heteromer composed of three CRYAA and one CRYAB subunits. Inter-subunit bridging via zinc ions enhances stability, which is crucial as there is no protein turn over in the lens. Can also form homodimers and homotetramers (dimers of dimers) which serve as the building blocks of homooligomers. Within homooligomers, the zinc-binding motif is created from residues of 3 different molecules. His-100 and Glu-102 from one molecule are ligands of the zinc ion, and His-107 and His-154 residues from additional molecules complete the site with tetrahedral coordination geometry. Part of a complex required for lens intermediate filament formation composed of BFSP1, BFSP2 and CRYAA. Acetylation at Lys-70 may increase chaperone activity. In terms of processing, undergoes age-dependent proteolytical cleavage at the C-terminus.

It is found in the cytoplasm. Its subcellular location is the nucleus. Its function is as follows. Contributes to the transparency and refractive index of the lens. Acts as a chaperone, preventing aggregation of various proteins under a wide range of stress conditions. Required for the correct formation of lens intermediate filaments as part of a complex composed of BFSP1, BFSP2 and CRYAA. This chain is Alpha-crystallin A chain (CRYAA), found in Giraffa camelopardalis (Giraffe).